The sequence spans 186 residues: Large ribosomal subunit protein bL12c (186 aa).

Polar residues predominate over residues 1 to 11 (MASTLSTITLR). Disordered stretches follow at residues 1–23 (MAST…STHA) and 162–186 (EGVS…VSIA). The N-terminal 53 residues, 1–53 (MASTLSTITLRSPSPSTASSTHASIPFPKKALEFPIRTPKLHHRRATFLRPLA), are a transit peptide targeting the chloroplast. The span at 12 to 23 (SPSPSTASSTHA) shows a compositional bias: low complexity. Residues 162–180 (EGVSKDEAEDAKKQLEEAG) show a composition bias toward basic and acidic residues.

This sequence belongs to the bacterial ribosomal protein bL12 family.

Its subcellular location is the plastid. The protein resides in the chloroplast. This is Large ribosomal subunit protein bL12c (RPL12) from Nicotiana tabacum (Common tobacco).